The chain runs to 321 residues: Corticotropin-releasing factor-binding protein (321 aa).

Positions 1 to 21 (MTPASRPDWCLILLFLAVLRG) are cleaved as a signal peptide. 5 disulfides stabilise this stretch: Cys-59–Cys-80, Cys-103–Cys-140, Cys-182–Cys-204, Cys-237–Cys-264, and Cys-277–Cys-317. The N-linked (GlcNAc...) asparagine glycan is linked to Asn-203.

The protein belongs to the CRF-binding protein family.

It is found in the secreted. Functionally, binds CRF and inactivates it. May prevent inappropriate pituitary-adrenal stimulation in pregnancy. In Xenopus laevis (African clawed frog), this protein is Corticotropin-releasing factor-binding protein (crhbp).